The primary structure comprises 158 residues: SsrA-binding protein (158 aa).

Over residues 133–152 (KRQTLREQQDNREAQREMRE) the composition is skewed to basic and acidic residues. The segment at 133–158 (KRQTLREQQDNREAQREMRERNRRRG) is disordered.

The protein belongs to the SmpB family.

The protein resides in the cytoplasm. Required for rescue of stalled ribosomes mediated by trans-translation. Binds to transfer-messenger RNA (tmRNA), required for stable association of tmRNA with ribosomes. tmRNA and SmpB together mimic tRNA shape, replacing the anticodon stem-loop with SmpB. tmRNA is encoded by the ssrA gene; the 2 termini fold to resemble tRNA(Ala) and it encodes a 'tag peptide', a short internal open reading frame. During trans-translation Ala-aminoacylated tmRNA acts like a tRNA, entering the A-site of stalled ribosomes, displacing the stalled mRNA. The ribosome then switches to translate the ORF on the tmRNA; the nascent peptide is terminated with the 'tag peptide' encoded by the tmRNA and targeted for degradation. The ribosome is freed to recommence translation, which seems to be the essential function of trans-translation. The chain is SsrA-binding protein from Pseudarthrobacter chlorophenolicus (strain ATCC 700700 / DSM 12829 / CIP 107037 / JCM 12360 / KCTC 9906 / NCIMB 13794 / A6) (Arthrobacter chlorophenolicus).